The primary structure comprises 276 residues: Cell wall synthesis protein KRE9 (276 aa).

A signal peptide spans 1–21 (MRLQRNSIICALVFLVSFVLG).

It belongs to the KRE9/KNH1 family. Post-translationally, O-glycosylated.

The protein resides in the secreted. The protein localises to the cell wall. Functionally, involved in cell wall beta(1-&gt;6) glucan synthesis. The chain is Cell wall synthesis protein KRE9 from Saccharomyces cerevisiae (strain ATCC 204508 / S288c) (Baker's yeast).